The primary structure comprises 454 residues: Bifunctional protein GlmU (454 aa).

Positions 1–226 are pyrophosphorylase; sequence MALNVVILAA…AIEVEGANNR (226 aa). Residues 8–11, Lys-22, Gln-73, 78–79, 100–102, Gly-137, Glu-151, Asn-166, and Asn-224 contribute to the UDP-N-acetyl-alpha-D-glucosamine site; these read LAAG, GT, and YGD. Residue Asp-102 coordinates Mg(2+). Asn-224 is a binding site for Mg(2+). Positions 227 to 247 are linker; it reads VQLAQLERAYQAREAEKLMIA. Positions 248 to 454 are N-acetyltransferase; it reads GANLRDPSRI…GWQRPVKIKE (207 aa). 2 residues coordinate UDP-N-acetyl-alpha-D-glucosamine: Arg-330 and Lys-348. The active-site Proton acceptor is the His-360. 2 residues coordinate UDP-N-acetyl-alpha-D-glucosamine: Tyr-363 and Asn-374. Residues Ala-377, 383-384, Ser-402, Ala-420, and Arg-437 each bind acetyl-CoA; that span reads NY.

It in the N-terminal section; belongs to the N-acetylglucosamine-1-phosphate uridyltransferase family. This sequence in the C-terminal section; belongs to the transferase hexapeptide repeat family. Homotrimer. The cofactor is Mg(2+).

The protein localises to the cytoplasm. It catalyses the reaction alpha-D-glucosamine 1-phosphate + acetyl-CoA = N-acetyl-alpha-D-glucosamine 1-phosphate + CoA + H(+). The enzyme catalyses N-acetyl-alpha-D-glucosamine 1-phosphate + UTP + H(+) = UDP-N-acetyl-alpha-D-glucosamine + diphosphate. It participates in nucleotide-sugar biosynthesis; UDP-N-acetyl-alpha-D-glucosamine biosynthesis; N-acetyl-alpha-D-glucosamine 1-phosphate from alpha-D-glucosamine 6-phosphate (route II): step 2/2. Its pathway is nucleotide-sugar biosynthesis; UDP-N-acetyl-alpha-D-glucosamine biosynthesis; UDP-N-acetyl-alpha-D-glucosamine from N-acetyl-alpha-D-glucosamine 1-phosphate: step 1/1. The protein operates within bacterial outer membrane biogenesis; LPS lipid A biosynthesis. In terms of biological role, catalyzes the last two sequential reactions in the de novo biosynthetic pathway for UDP-N-acetylglucosamine (UDP-GlcNAc). The C-terminal domain catalyzes the transfer of acetyl group from acetyl coenzyme A to glucosamine-1-phosphate (GlcN-1-P) to produce N-acetylglucosamine-1-phosphate (GlcNAc-1-P), which is converted into UDP-GlcNAc by the transfer of uridine 5-monophosphate (from uridine 5-triphosphate), a reaction catalyzed by the N-terminal domain. This chain is Bifunctional protein GlmU, found in Shewanella sp. (strain MR-7).